Here is a 215-residue protein sequence, read N- to C-terminus: Cytokinin riboside 5'-monophosphate phosphoribohydrolase LOG3 (215 aa).

Residues Glu-84, 102-103, 119-125, and Thr-131 contribute to the substrate site; these read RK and GYGTLEE.

Belongs to the LOG family. As to expression, expressed in roots and shoots. Detected in root procambium, lateral root primordia, vascular tissues of immature leaves, axillary buds, style and ovular funiculus.

The protein localises to the cytoplasm. It is found in the nucleus. The enzyme catalyses N(6)-(dimethylallyl)adenosine 5'-phosphate + H2O = N(6)-dimethylallyladenine + D-ribose 5-phosphate. It carries out the reaction 9-ribosyl-trans-zeatin 5'-phosphate + H2O = trans-zeatin + D-ribose 5-phosphate. In terms of biological role, cytokinin-activating enzyme working in the direct activation pathway. Phosphoribohydrolase that converts inactive cytokinin nucleotides to the biologically active free-base forms. The sequence is that of Cytokinin riboside 5'-monophosphate phosphoribohydrolase LOG3 (LOG3) from Arabidopsis thaliana (Mouse-ear cress).